The chain runs to 127 residues: Holo-[acyl-carrier-protein] synthase (127 aa).

Mg(2+) contacts are provided by D9 and E58.

Belongs to the P-Pant transferase superfamily. AcpS family. Mg(2+) is required as a cofactor.

Its subcellular location is the cytoplasm. It carries out the reaction apo-[ACP] + CoA = holo-[ACP] + adenosine 3',5'-bisphosphate + H(+). Its function is as follows. Transfers the 4'-phosphopantetheine moiety from coenzyme A to a Ser of acyl-carrier-protein. This is Holo-[acyl-carrier-protein] synthase from Shewanella baltica (strain OS223).